Here is a 149-residue protein sequence, read N- to C-terminus: UPF0756 membrane protein BBR47_32760 (149 aa).

5 consecutive transmembrane segments (helical) span residues 3–23 (WISIILLVLLALGVIGNNATV), 48–68 (HGLQLGIIILTIGIMTPLASG), 85–105 (LLAVAVGMFVAYLAGKGTVLM), 106–126 (SQNPLIVTGLLLGTIAGVTFF), and 128–148 (GVAVGPLIAAGILAFILQFLP).

This sequence belongs to the UPF0756 family.

It localises to the cell membrane. The polypeptide is UPF0756 membrane protein BBR47_32760 (Brevibacillus brevis (strain 47 / JCM 6285 / NBRC 100599)).